The following is a 621-amino-acid chain: UvrABC system protein C (621 aa).

In terms of domain architecture, GIY-YIG spans 20–98; that stretch reads TAPGVYRMYA…IKSLTPRYNV (79 aa). The 36-residue stretch at 207 to 242 folds into the UVR domain; that stretch reads DLLAEELIQAMQVASEHLEFEQAARLRDLLTSLRSM.

Belongs to the UvrC family. Interacts with UvrB in an incision complex.

It is found in the cytoplasm. In terms of biological role, the UvrABC repair system catalyzes the recognition and processing of DNA lesions. UvrC both incises the 5' and 3' sides of the lesion. The N-terminal half is responsible for the 3' incision and the C-terminal half is responsible for the 5' incision. The chain is UvrABC system protein C from Xylella fastidiosa (strain Temecula1 / ATCC 700964).